A 388-amino-acid chain; its full sequence is Succinate--CoA ligase [ADP-forming] subunit beta (388 aa).

Residues Lys-9–His-244 enclose the ATP-grasp domain. Residues Lys-46, Gly-53–Gly-55, Glu-99, Thr-102, and Glu-107 each bind ATP. Residues Asn-199 and Asp-213 each coordinate Mg(2+). Residues Asn-264 and Gly-321–Val-323 each bind substrate.

Belongs to the succinate/malate CoA ligase beta subunit family. As to quaternary structure, heterotetramer of two alpha and two beta subunits. Mg(2+) is required as a cofactor.

The catalysed reaction is succinate + ATP + CoA = succinyl-CoA + ADP + phosphate. It carries out the reaction GTP + succinate + CoA = succinyl-CoA + GDP + phosphate. It functions in the pathway carbohydrate metabolism; tricarboxylic acid cycle; succinate from succinyl-CoA (ligase route): step 1/1. Its function is as follows. Succinyl-CoA synthetase functions in the citric acid cycle (TCA), coupling the hydrolysis of succinyl-CoA to the synthesis of either ATP or GTP and thus represents the only step of substrate-level phosphorylation in the TCA. The beta subunit provides nucleotide specificity of the enzyme and binds the substrate succinate, while the binding sites for coenzyme A and phosphate are found in the alpha subunit. In Shewanella oneidensis (strain ATCC 700550 / JCM 31522 / CIP 106686 / LMG 19005 / NCIMB 14063 / MR-1), this protein is Succinate--CoA ligase [ADP-forming] subunit beta.